Reading from the N-terminus, the 278-residue chain is Elongation factor Ts (278 aa).

Residues 80–83 (TDFV) form an involved in Mg(2+) ion dislocation from EF-Tu region.

Belongs to the EF-Ts family.

It localises to the cytoplasm. Functionally, associates with the EF-Tu.GDP complex and induces the exchange of GDP to GTP. It remains bound to the aminoacyl-tRNA.EF-Tu.GTP complex up to the GTP hydrolysis stage on the ribosome. The sequence is that of Elongation factor Ts from Arthrobacter sp. (strain FB24).